The sequence spans 425 residues: MEKSKELFARACKTIPGGVNSPVRACGSVGTDPCFIARGQGSAIFDADGKQYIDYIGSWGPLILGHRHPAVIKAIEAALANGCTFGAPTELEIDLAEAVVNIMPSVEMVRMVNSGTEATMSAIRLARGATGRDGIVKFDGCYHGHGDSLLVAAGSGVATLGIPGSPGVPDKVAESTASLEYNNIEAVKEYCKKKGDRTAAIIVEPVAGNMGVVAPKPEFIQGLREVCDQYGIVLILDEVMTGFRVALGGAQSLYGVTPDLTTMGKVIGGGLPVGAYGGKRSLMEKIAPSGPVYQAGTLSGNPMAMAAGIATLKEISAPGFYEALEKSSQTLADGLKKAAADAGVEAVISRVGSMQTLFFSAGPVENFEDAKKCDLDRFSKFYQGMRAEGVFLPPSQFEAWFVSSAHTEADIEATLKAAEKVLRQL.

The residue at position 265 (Lys-265) is an N6-(pyridoxal phosphate)lysine.

This sequence belongs to the class-III pyridoxal-phosphate-dependent aminotransferase family. HemL subfamily. As to quaternary structure, homodimer. Pyridoxal 5'-phosphate is required as a cofactor.

Its subcellular location is the cytoplasm. The enzyme catalyses (S)-4-amino-5-oxopentanoate = 5-aminolevulinate. The protein operates within porphyrin-containing compound metabolism; protoporphyrin-IX biosynthesis; 5-aminolevulinate from L-glutamyl-tRNA(Glu): step 2/2. This chain is Glutamate-1-semialdehyde 2,1-aminomutase, found in Desulfatibacillum aliphaticivorans.